Consider the following 198-residue polypeptide: Superoxide dismutase [Mn], mitochondrial (198 aa).

His26 provides a ligand contact to Mn(2+). The residue at position 34 (Tyr34) is a 3'-nitrotyrosine. Residues Lys44 and Lys51 each carry the N6-acetyllysine; alternate modification. An N6-succinyllysine; alternate mark is found at Lys44 and Lys51. Mn(2+) is bound at residue His74. Lys90 is modified (N6-acetyllysine). N6-acetyllysine; alternate is present on residues Lys98 and Lys106. 2 positions are modified to N6-succinyllysine; alternate: Lys98 and Lys106. Mn(2+) contacts are provided by Asp159 and His163. Lys178 is modified (N6-acetyllysine).

It belongs to the iron/manganese superoxide dismutase family. Homotetramer. It depends on Mn(2+) as a cofactor. In terms of processing, nitrated under oxidative stress. Nitration coupled with oxidation inhibits the catalytic activity. Post-translationally, acetylation at Lys-98 decreases enzymatic activity. Deacetylated by SIRT3 upon exposure to ionizing radiations or after long fasting. Polyubiquitinated; leading to proteasomal degradation. Deubiquitinated by USP36 which increases protein stability.

Its subcellular location is the mitochondrion matrix. It catalyses the reaction 2 superoxide + 2 H(+) = H2O2 + O2. Destroys superoxide anion radicals which are normally produced within the cells and which are toxic to biological systems. This is Superoxide dismutase [Mn], mitochondrial (SOD2) from Hylobates lar (Lar gibbon).